A 194-amino-acid chain; its full sequence is Phosphoheptose isomerase (194 aa).

The SIS domain occupies 37–194 (ISNSFKQGGK…LIEFEMAKQA (158 aa)). Residue 52–54 (NGG) participates in substrate binding. 2 residues coordinate Zn(2+): His61 and Glu65. Residues Glu65, 93–94 (ND), 119–121 (STS), Ser124, and Gln172 contribute to the substrate site. Positions 172 and 180 each coordinate Zn(2+).

This sequence belongs to the SIS family. GmhA subfamily. In terms of assembly, homotetramer. Zn(2+) serves as cofactor.

The protein resides in the cytoplasm. The enzyme catalyses 2 D-sedoheptulose 7-phosphate = D-glycero-alpha-D-manno-heptose 7-phosphate + D-glycero-beta-D-manno-heptose 7-phosphate. The protein operates within carbohydrate biosynthesis; D-glycero-D-manno-heptose 7-phosphate biosynthesis; D-glycero-alpha-D-manno-heptose 7-phosphate and D-glycero-beta-D-manno-heptose 7-phosphate from sedoheptulose 7-phosphate: step 1/1. In terms of biological role, catalyzes the isomerization of sedoheptulose 7-phosphate in D-glycero-D-manno-heptose 7-phosphate. This Actinobacillus pleuropneumoniae serotype 5b (strain L20) protein is Phosphoheptose isomerase.